We begin with the raw amino-acid sequence, 454 residues long: NADP-specific glutamate dehydrogenase (454 aa).

S2 carries the N-acetylserine modification. K114 is an active-site residue.

This sequence belongs to the Glu/Leu/Phe/Val dehydrogenases family. As to quaternary structure, homohexamer.

It carries out the reaction L-glutamate + NADP(+) + H2O = 2-oxoglutarate + NH4(+) + NADPH + H(+). This is NADP-specific glutamate dehydrogenase (GDH) from Neurospora intermedia.